We begin with the raw amino-acid sequence, 96 residues long: MKSSLRFLGQELVVEGVIPADNAFNEAVYDEFIKIFGTDKKFGIFPSENFSKPEQTESIFQGVVTGKFESEAPVKIEVYIEDSLVASVAAFISFRK.

This is an uncharacterized protein from Enterobacteria phage T4 (Bacteriophage T4).